Here is a 1165-residue protein sequence, read N- to C-terminus: Tectonin beta-propeller repeat-containing protein 1 (1165 aa).

TECPR repeat units follow at residues 209–240 (LSVWAVSLQGKVWYREDVSHSNPEGSSWSLLD), 254–285 (DLLWATLWEGQALVREGINRSNPKGSSWSIVE), 301–332 (SVVWAVTKDWKVWFRRGVNSHNPCGTSWIEMV), and 344–376 (DQVWGIGCEDRAVYFRQGVTPSELSGKTWKAII). Phosphoserine occurs at positions 386, 388, 391, 412, and 417. Positions 404–486 (RGSGESAPSD…GPAPTPAELP (83 aa)) are disordered. The PH domain maps to 611–717 (KTGALQWWCD…WLALLSLSCC (107 aa)). A TECPR 5 repeat occupies 729–756 (QAIWSITCKGDIFVSEPSPDLEAHEHPL). Residues serine 938 and serine 949 each carry the phosphoserine modification. TECPR repeat units lie at residues 953-984 (IALWAVSDKGDVLCRLGVSELNPAGSSWLHVG), 998-1029 (YQVWAVARDGSAFYRGSVYPSQPAGDCWYHIP), 1044-1075 (TSVYALDENGNLWYRQGITPSYPQGSSWEHVS), and 1087-1127 (DQVW…DYGI). The segment at 1140–1165 (ATRAPRSSSQEQEPSAPPEAHGPVCC) is disordered. Over residues 1143–1153 (APRSSSQEQEP) the composition is skewed to low complexity.

Belongs to the TECPR1 family. Interacts with ATG5; the interaction is direct. Interacts with WIPI2. Interacts with the ATG5-ATG12 conjugate, the interaction is however mutually exclusive with ATG16, since it does not interact with ATG12-ATG5-ATG16 complex.

Its subcellular location is the cytoplasmic vesicle. The protein localises to the autophagosome membrane. The protein resides in the lysosome membrane. Its function is as follows. Tethering factor involved in autophagy. Involved in autophagosome maturation by promoting the autophagosome fusion with lysosomes: acts by associating with both the ATG5-ATG12 conjugate and phosphatidylinositol-3-phosphate (PtdIns(3)P) present at the surface of autophagosomes. Also involved in selective autophagy against bacterial pathogens, by being required for phagophore/preautophagosomal structure biogenesis and maturation. The chain is Tectonin beta-propeller repeat-containing protein 1 (TECPR1) from Homo sapiens (Human).